A 122-amino-acid polypeptide reads, in one-letter code: Large ribosomal subunit protein uL14 (122 aa).

It belongs to the universal ribosomal protein uL14 family. In terms of assembly, part of the 50S ribosomal subunit. Forms a cluster with proteins L3 and L19. In the 70S ribosome, L14 and L19 interact and together make contacts with the 16S rRNA in bridges B5 and B8.

Binds to 23S rRNA. Forms part of two intersubunit bridges in the 70S ribosome. The polypeptide is Large ribosomal subunit protein uL14 (Chlamydia trachomatis serovar L2 (strain ATCC VR-902B / DSM 19102 / 434/Bu)).